A 236-amino-acid polypeptide reads, in one-letter code: 2-C-methyl-D-erythritol 4-phosphate cytidylyltransferase (236 aa).

This sequence belongs to the IspD/TarI cytidylyltransferase family. IspD subfamily. Homodimer.

It carries out the reaction 2-C-methyl-D-erythritol 4-phosphate + CTP + H(+) = 4-CDP-2-C-methyl-D-erythritol + diphosphate. It participates in isoprenoid biosynthesis; isopentenyl diphosphate biosynthesis via DXP pathway; isopentenyl diphosphate from 1-deoxy-D-xylulose 5-phosphate: step 2/6. Catalyzes the formation of 4-diphosphocytidyl-2-C-methyl-D-erythritol from CTP and 2-C-methyl-D-erythritol 4-phosphate (MEP). The chain is 2-C-methyl-D-erythritol 4-phosphate cytidylyltransferase from Cronobacter sakazakii (strain ATCC BAA-894) (Enterobacter sakazakii).